Consider the following 172-residue polypeptide: 3-hydroxydecanoyl-[acyl-carrier-protein] dehydratase (172 aa).

The active site involves His71.

The protein belongs to the thioester dehydratase family. FabA subfamily. As to quaternary structure, homodimer.

It localises to the cytoplasm. The enzyme catalyses a (3R)-hydroxyacyl-[ACP] = a (2E)-enoyl-[ACP] + H2O. It carries out the reaction (3R)-hydroxydecanoyl-[ACP] = (2E)-decenoyl-[ACP] + H2O. It catalyses the reaction (2E)-decenoyl-[ACP] = (3Z)-decenoyl-[ACP]. Its pathway is lipid metabolism; fatty acid biosynthesis. Necessary for the introduction of cis unsaturation into fatty acids. Catalyzes the dehydration of (3R)-3-hydroxydecanoyl-ACP to E-(2)-decenoyl-ACP and then its isomerization to Z-(3)-decenoyl-ACP. Can catalyze the dehydratase reaction for beta-hydroxyacyl-ACPs with saturated chain lengths up to 16:0, being most active on intermediate chain length. In Enterobacter sp. (strain 638), this protein is 3-hydroxydecanoyl-[acyl-carrier-protein] dehydratase.